A 226-amino-acid polypeptide reads, in one-letter code: Cytidylate kinase (226 aa).

10 to 18 (GPASSGKST) provides a ligand contact to ATP.

It belongs to the cytidylate kinase family. Type 1 subfamily.

The protein resides in the cytoplasm. The enzyme catalyses CMP + ATP = CDP + ADP. The catalysed reaction is dCMP + ATP = dCDP + ADP. The chain is Cytidylate kinase from Streptococcus uberis (strain ATCC BAA-854 / 0140J).